A 612-amino-acid chain; its full sequence is MAFLQTWLADYQIPLTLAVIVFALVMFVLEWLPIDTTAILVAVILMVLGLVTPTEGIAGFSNSATVTIMAMFILSYGITRTGIIQIIRDSLIKFGGDSLRRQLLLMGFIVGPSSAFLNNTAIVAIFLPIIEEWARQRQISVSKLLIPLSYATILGGMITLLGTSTNILASGLAEKLTGQGFSIFQFTPLGLLTFSVGLIYIVLAAPILLPARRNISDGNVAAEYQIKDYVSEIIIPPRSSLIGQTLRQSEIQRKFDIDVLEIIHNDTHFPQPLADRVLTMGDILLVRAGREDLLRIKDERGIEILADVQFVSAETNNAGPLESSEEKVAEVLILSNSRLIGSTLKDLRFRQRYNATVIAIRRGEELIRQRLGKVRLKFGDLLLLQGPRESFLGLQTTRELLVLEEKPLDNLRLDKAKTAIAIVALVIVIAGLDILPISVTSWAGVMAMVISGCLKPGEIYGAIRWDVIFLLAGLIPLGTAMENSGTTAWFASFLADAGGHLSGYALLLLFYLATALLTEILSNNATVVLMLPIAFQVAQSLGLNPLAFMFVVTFAASNSFMSPIGYQTNTMVYGPGGYRFTDFARIGAPLTVILTLATPLLVMLIYGVQPTN.

6 helical membrane passes run 13–33 (IPLT…EWLP), 38–58 (AILV…EGIA), 67–87 (TIMA…IQII), 107–127 (GFIV…AIFL), 144–164 (LLIP…LGTS), and 189–209 (LGLL…PILL). RCK C-terminal domains lie at 218-302 (GNVA…ERGI) and 316-403 (NNAG…LLVL). 6 helical membrane-spanning segments follow: residues 419–439 (AIAI…PISV), 459–479 (IYGA…PLGT), 501–521 (LSGY…TEIL), 525–545 (ATVV…GLNP), 546–566 (LAFM…PIGY), and 586–606 (IGAP…MLIY).

This sequence belongs to the SLC13A/DASS transporter (TC 2.A.47) family. NADC subfamily.

It localises to the cell membrane. This is an uncharacterized protein from Synechocystis sp. (strain ATCC 27184 / PCC 6803 / Kazusa).